A 280-amino-acid chain; its full sequence is Pantothenate synthetase (280 aa).

Residue 26 to 33 participates in ATP binding; the sequence is MGNLHEGH. Residue H33 is the Proton donor of the active site. Q57 contributes to the (R)-pantoate binding site. Q57 contacts beta-alanine. An ATP-binding site is contributed by 145-148; the sequence is GKKD. Q151 lines the (R)-pantoate pocket. ATP is bound by residues V174 and 182-185; that span reads LSSR.

Belongs to the pantothenate synthetase family. Homodimer.

The protein resides in the cytoplasm. It catalyses the reaction (R)-pantoate + beta-alanine + ATP = (R)-pantothenate + AMP + diphosphate + H(+). Its pathway is cofactor biosynthesis; (R)-pantothenate biosynthesis; (R)-pantothenate from (R)-pantoate and beta-alanine: step 1/1. Catalyzes the condensation of pantoate with beta-alanine in an ATP-dependent reaction via a pantoyl-adenylate intermediate. This is Pantothenate synthetase from Bordetella avium (strain 197N).